A 194-amino-acid chain; its full sequence is Putative lipoprotein LppK (194 aa).

The N-terminal stretch at methionine 1–glycine 26 is a signal peptide. The N-palmitoyl cysteine moiety is linked to residue cysteine 27. Cysteine 27 is lipidated: S-diacylglycerol cysteine. A disordered region spans residues glycine 174–histidine 194. Pro residues predominate over residues isoleucine 185–histidine 194.

The protein belongs to the MTB12 family.

It is found in the cell membrane. This chain is Putative lipoprotein LppK (lppK), found in Mycobacterium leprae (strain TN).